A 63-amino-acid polypeptide reads, in one-letter code: MGGLSVGSVVLIALVALLIFGPKKLPELGKAAGSTLREFKNATKGLADDDDDTKSTNVQKEKA.

A helical membrane pass occupies residues 1–21; that stretch reads MGGLSVGSVVLIALVALLIFG.

It belongs to the TatA/E family. Forms a complex with TatC.

The protein resides in the cell membrane. In terms of biological role, part of the twin-arginine translocation (Tat) system that transports large folded proteins containing a characteristic twin-arginine motif in their signal peptide across membranes. TatA could form the protein-conducting channel of the Tat system. This is Sec-independent protein translocase protein TatA from Shouchella clausii (strain KSM-K16) (Alkalihalobacillus clausii).